The following is a 70-amino-acid chain: MSREGFQIPTNLDAAAAGTSQARTATLKYICAECSSKLSLSRTDAVRCKDCGHRILLKARTKRLVQFEAR.

Residues Cys31, Cys34, Cys48, and Cys51 each contribute to the Zn(2+) site. The C4-type zinc finger occupies 31-51 (CAECSSKLSLSRTDAVRCKDC).

It belongs to the archaeal Rpo12/eukaryotic RPC10 RNA polymerase subunit family. In terms of assembly, component of the RNA polymerase I (Pol I), RNA polymerase II (Pol II) and RNA polymerase III (Pol III) complexes. Component of the RNA polymerase I (Pol I) complex consisting of 14 subunits: RPA135, RPA190, RPC40, RPA14, RPB5, RPO26, RPA43, RPB8, RPA12, RPB10, RPC19, RPC10, RPA49 and RPA34. The complex is composed of a horseshoe-shaped core containing ten subunits (RPA135, RPA190, RPB5, RPO26, RPB8, RPB10, RPC10, RPA12, RPC19 and RPC40) where RPA135 and RPA190 form the DNA-binding cleft. Outside of the core, RPA14 and RPA43 form the stalk that mediates interactions with transcription initiation factors and newly synthesized RNA. Component of the RNA polymerase II (Pol II) complex consisting of 12 subunits: RPO21, RPB2, RPB3, RPB4, RPB5, RPO26, RPB7, RPB8, RPB9, RPB10 and RPC10. Component of the RNA polymerase III (Pol III) complex consisting of 17 subunits. Interacts, via its C-terminus, with TFIIIC subunit TFC4. Post-translationally, the N-terminus is blocked.

The protein resides in the nucleus. It localises to the nucleolus. The protein localises to the peroxisome. Functionally, DNA-dependent RNA polymerases catalyze the transcription of DNA into RNA using the four ribonucleoside triphosphates as substrates. Common component of RNA polymerases I, II and III which synthesize ribosomal RNA precursors, mRNA precursors and many functional non-coding RNAs, and a small RNAs, such as 5S rRNA and tRNAs, respectively. RNA polymerases are composed of mobile elements that move relative to each other. In Pol II, the core element with the central large cleft comprises RPB3, RBP10, RPB11, RPB12 and regions of RPB1 and RPB2 forming the active center. This Saccharomyces cerevisiae (strain ATCC 204508 / S288c) (Baker's yeast) protein is DNA-directed RNA polymerases I, II, and III subunit RPABC4 (RPC10).